A 647-amino-acid chain; its full sequence is Exoribonuclease 2 (647 aa).

The region spanning 192–520 (REDLTALSFV…NHRLLKAIIS (329 aa)) is the RNB domain. In terms of domain architecture, S1 motif spans 565 to 647 (ESTFNAEIID…ETRNIVARPI (83 aa)).

This sequence belongs to the RNR ribonuclease family. RNase II subfamily.

It is found in the cytoplasm. The catalysed reaction is Exonucleolytic cleavage in the 3'- to 5'-direction to yield nucleoside 5'-phosphates.. In terms of biological role, involved in mRNA degradation. Hydrolyzes single-stranded polyribonucleotides processively in the 3' to 5' direction. In Proteus mirabilis (strain HI4320), this protein is Exoribonuclease 2.